Here is a 2498-residue protein sequence, read N- to C-terminus: MSSSGYPPNQGAFSTEQGRYSSHPVQYTFPSSRHQQEYSVSEYRTAHLEASQLIQQQQLRRRPSLLSEFHPVSDRPQDRRSGYDQQYHSISQNEHEALESKRPRLDQVSDSHYRLNPAMVLLVPTIQEGVRVQSEVKKEQGLSSKHESSSSPLSGQPGDDQDASPSKLSKEELIQSMDRVDREIAKVEQQILKLKKKQQQLEEEAAKPPEPEKPVSPPPVEQKHRSVVQIIYDENRKKAEEAHKFLEGLGPKVELPLYNQPSDTKVYHENIKTNQVMRKKLILFFKRRNHARKLREQNICQRYDQLMEAWEKKVDRIENNPRRKAKESKTREYYEKQFPEIRKQREQQERFQRVGQRGTGMSATIARSEHEISEIIDGLSEQENNEKQMRQLSVIPPMMFDAEQRRVKFINTNGLMEDPMKVYKDRQFMNVWTDHEKEIFKEKFVRHPKNFGLIASYLERKNVSDCVLYYYLTKKNENLKSLVRRNYPKRRGRNQQQITRPSQEEKEIEKVEEEKADRNDKKEDERREEEEKEEKEELREGAKDKIDAVAEDGDEKDQSMPRGRKTANNQGRRKGRVTRSMASEAAAANAVTTATTAPVTTTSTATTVAPVPVAPPPEEPTPPPPPQEQSLVDHGRNWGAIAKMVGSKSESQCKNFYFNYKRRHNLDNLLQQHKQKSSRRPREERDVSQCDSIASTVSAQEDDENEASNEEENPEDSEGAENSSDTESAPSPSPAEAARLGDDSVDRTTSSVSMEAPPEQDAASKPASDSSPSPIVENTKPPETQYAELKVKEEISTENEQTMEVEERSQSAELKSALNLQVQTKAEPYETEAKPTESTTQVKTEVDSKEDDSMERLMDRAEAADMGYAPPQNISQARQESQPDNDSSATCSADEEVDGEPDRPRMYSFGSRPSLLNQAGTFLKQGPMDLQQLQHRAAVIPPMTSCSPCNLTTGTAIAASNFSMYQRHLYENSLLEEQRQRQEQLTLENRMSASPGNMSKSPNMDWEGKSVYMPYTEVKHPFEHEAQMQNVARSVSPYRLSPRDVGRVSPQVDMNPSRYCVPPVLQPAPHQVITSLSDSARLPVTRPTRPPPPLIPSSKTSATSSDKPSFITGGSISQGTPGTYLASLSQPYSQETLKPSVGSISLGLPRQHESTKIGCVTYIKQEEFPSRGQSSQPEGLLVRAQHEGVVRGSMAAIQEGSIARGTPATKVPLEAVSTLRGSITQGTPALSQSGIAADVLLKSTITRLAAEDIGSPERCREDTSAKGHVIYEGKSGHIVSYDTIKNMREGTRSPRTAPEVALKRAYDTMEGNIKQAMSVREAAVSGPMEGLICRTLPKGSPHPELKDRQVLSGSIMKGTPRTTSDNFDDGLKYAKQIKLESPPIRSFEGAISKGKPYEGVTTIKELGRSIHEIPRQDLVSQESRKTPESSRQIMEGSISQGTPIKYESTSGQSAIKHNVKSLITGPSNLSWGVPQMDNMPENLKMGERSKHEDTKSSDAIRSRHTSVVSSGPSVLRSTLHEASKSQLSPGIYEDNNARRTPVNYPSPMSRSSPMARSAEGCLTPSKSSSHERKSTLTPTQRESIVVKSPVPGVDPSAAHSPFDTHLRSAPPGDVYRAHLPPHLDPALQFHRPLDPAAAAYLFQRQLSPTPGYPSQYQLYAMENTRQTILNDYITSQQMQVNLRPDVARGLSPRDQGLGIPYPGARGIIDLTNMPPAILVPHPGGTSTPPMDRITYIPGTQLAFPPRPYNPASMSPGHPAHLANSVSAERERERERERERDREREKEQRERESDRERERDRLAHAAAAAAAASAPSEHYLRPVSEQPSRPSSRPSSHGYVRSPSPSVRAQESIMQQRPSIFLGTNGKSVITPLDAAQFRIMPPTPGAASITQGIPASRYSTAADALAALVDAATSAPQMEVAKPKESKNDSARSEENLSRRNALEQQQQIDCERRVMQSPYTSSSFSSSKSQSQPSSAVYSEAGKERTAHTKSRYVEELRMRGKTTITAANFIDVIITQQIASDKDGRERNSQSSDASSSHSSHRYEAPRETIEVISPANSPVQEKESYPQEMPKSSQTETGEGSRKYDGQPNRYRQQQESPPQQTIPGHVPQTHRLITLADHICHIITQDFARNQPVNQPLQQPPASTFQSTNPTSTAVRTKASSRFSPESQVQPMHSPRPASRVSPENIPDKPRGRPGKSPDRGHISEPYEPISPPQAPMLHTKQDNMMLLSQRQEPPEQRNDSRSPGNINYLPSFFTKLENTSPMVMYKKQEIFRKLNSSGGGDSDMAAAQPGTEIFNLPAVTTSGAISSRGHSFADPASNLGLEDIIRKALMGNFDDKSEDHGVLVGVPQGNQSGTPNSEARREEANPSPNSGGGTHKQKLISKYGSRKTKSPISGSQTYLGAERPSSVSSVHSEGDYRQASAWAWEDRPSSTGSTQFPYNPLTMGMLNSTPPSSMSCIPTSMTQTSAHQQSRIWEREPAPLLSEQYETLSDSDE.

4 disordered regions span residues 1–38, 54–84, 134–169, and 198–223; these read MSSSGYPPNQGAFSTEQGRYSSHPVQYTFPSSRHQQEY, IQQQQLRRRPSLLSEFHPVSDRPQDRRSGYD, SEVKKEQGLSSKHESSSSPLSGQPGDDQDASPSKLS, and QQQLEEEAAKPPEPEKPVSPPPVEQK. Basic and acidic residues-rich tracts occupy residues 71-82, 134-148, and 204-213; these read PVSDRPQDRRSG, SEVKKEQGLSSKHES, and EAAKPPEPEK. The interval 154–304 is interaction with tbl1xr1-A; the sequence is SGQPGDDQDA…REQNICQRYD (151 aa). A coiled-coil region spans residues 168-208; it reads LSKEELIQSMDRVDREIAKVEQQILKLKKKQQQLEEEAAKP. An SANT 1 domain is found at 427 to 478; sequence QFMNVWTDHEKEIFKEKFVRHPKNFGLIASYLERKNVSDCVLYYYLTKKNEN. Residues 483 to 493 show a composition bias toward basic residues; the sequence is VRRNYPKRRGR. Disordered regions lie at residues 483-649, 668-912, 1075-1122, 1417-1436, 1470-1583, 1737-1851, and 1916-1990; these read VRRN…GSKS, NLLQ…FGSR, SLSD…GTPG, DLVSQESRKTPESSRQIMEG, SWGV…QRES, PGTQ…AQES, and PQME…TAHT. 2 stretches are compositionally biased toward basic and acidic residues: residues 502-525 and 535-548; these read SQEEKEIEKVEEEKADRNDKKEDE and KEELREGAKDKIDA. Residues 502–552 adopt a coiled-coil conformation; sequence SQEEKEIEKVEEEKADRNDKKEDERREEEEKEEKEELREGAKDKIDAVAED. The segment covering 582–611 has biased composition (low complexity); that stretch reads ASEAAAANAVTTATTAPVTTTSTATTVAPV. The span at 612 to 627 shows a compositional bias: pro residues; that stretch reads PVAPPPEEPTPPPPPQ. The region spanning 628-665 is the SANT 2 domain; that stretch reads EQSLVDHGRNWGAIAKMVGSKSESQCKNFYFNYKRRHN. Over residues 689–699 the composition is skewed to polar residues; that stretch reads QCDSIASTVSA. Acidic residues predominate over residues 700–719; the sequence is QEDDENEASNEEENPEDSEG. 2 stretches are compositionally biased toward low complexity: residues 727 to 738 and 761 to 774; these read ESAPSPSPAEAA and DAASKPASDSSPSP. Basic and acidic residues predominate over residues 854–863; the sequence is MERLMDRAEA. Composition is skewed to polar residues over residues 872-891 and 1102-1122; these read QNISQARQESQPDNDSSATC and ATSSDKPSFITGGSISQGTPG. Residues 1484–1501 are compositionally biased toward basic and acidic residues; the sequence is KMGERSKHEDTKSSDAIR. Residues 1505-1516 are compositionally biased toward polar residues; sequence TSVVSSGPSVLR. The segment covering 1545 to 1558 has biased composition (low complexity); the sequence is PSPMSRSSPMARSA. The stretch at 1765–1804 forms a coiled coil; it reads VSAERERERERERERDREREKEQRERESDRERERDRLAHA. Residues 1767–1802 show a composition bias toward basic and acidic residues; the sequence is AERERERERERERDREREKEQRERESDRERERDRLA. Low complexity-rich tracts occupy residues 1803-1813 and 1820-1835; these read HAAAAAAAASA and RPVSEQPSRPSSRPSS. Over residues 1842–1851 the composition is skewed to polar residues; sequence PSPSVRAQES. The segment covering 1921–1942 has biased composition (basic and acidic residues); sequence AKPKESKNDSARSEENLSRRNA. The segment covering 1958–1980 has biased composition (low complexity); the sequence is SPYTSSSFSSSKSQSQPSSAVYS. Residues 2012–2016 carry the CORNR box 1 motif; it reads IDVII. A disordered region spans residues 2022-2109; that stretch reads SDKDGRERNS…SPPQQTIPGH (88 aa). Residues 2031–2040 are compositionally biased toward low complexity; the sequence is SQSSDASSSH. A compositionally biased stretch (basic and acidic residues) spans 2043–2052; it reads HRYEAPRETI. Positions 2093 to 2106 are enriched in polar residues; sequence RYRQQQESPPQQTI. The CORNR box 2 motif lies at 2123–2127; sequence ICHII. Residues 2136 to 2145 are compositionally biased toward low complexity; that stretch reads PVNQPLQQPP. Residues 2136–2222 form a disordered region; sequence PVNQPLQQPP…PISPPQAPML (87 aa). A compositionally biased stretch (polar residues) spans 2146–2175; the sequence is ASTFQSTNPTSTAVRTKASSRFSPESQVQP. A compositionally biased stretch (basic and acidic residues) spans 2190-2209; that stretch reads IPDKPRGRPGKSPDRGHISE. A CORNR box 3 motif is present at residues 2326–2330; that stretch reads LEDII. Disordered regions lie at residues 2344–2446 and 2464–2498; these read DHGV…YNPL and TSMTQTSAHQQSRIWEREPAPLLSEQYETLSDSDE. Positions 2353-2362 are enriched in polar residues; it reads QGNQSGTPNS. Basic residues predominate over residues 2380 to 2394; that stretch reads HKQKLISKYGSRKTK. Polar residues-rich tracts occupy residues 2464–2476 and 2489–2498; these read TSMTQTSAHQQSR and QYETLSDSDE.

This sequence belongs to the N-CoR nuclear receptor corepressors family. As to quaternary structure, forms a large corepressor complex that contains sin3a/b, histone deacetylases hdac1 and hdac2, rbbp4 and possibly rbbp7. Interacts with the thyroid receptor (TR, composed of rxra and thrb) and the retinoid acid receptor (RAR, composed of rxra and rara) in the absence of ligand. Interacts with tbl1xr1-A and possibly tbl1xr1-B. Interacts with zbtb33/kaiso.

It localises to the nucleus. Mediates transcriptional repression by certain nuclear receptors. Participates in complexes which promote histone deacetylation and the formation of repressive chromatin structures which may impede access by the basal transcription machinery. In association with hdac3, may play a role in the regulation of the circadian clock. The sequence is that of Nuclear receptor corepressor 1 (ncor1) from Xenopus laevis (African clawed frog).